We begin with the raw amino-acid sequence, 123 residues long: Seripauperin-16 (123 aa).

The first 20 residues, Met-1–Ala-20, serve as a signal peptide directing secretion.

It belongs to the SRP1/TIP1 family. Seripauperin subfamily.

In Saccharomyces cerevisiae (strain ATCC 204508 / S288c) (Baker's yeast), this protein is Seripauperin-16 (PAU16).